A 232-amino-acid polypeptide reads, in one-letter code: Biosynthetic peptidoglycan transglycosylase (232 aa).

The chain crosses the membrane as a helical span at residues Ala-14–Ile-34.

Belongs to the glycosyltransferase 51 family.

The protein resides in the cell inner membrane. It carries out the reaction [GlcNAc-(1-&gt;4)-Mur2Ac(oyl-L-Ala-gamma-D-Glu-L-Lys-D-Ala-D-Ala)](n)-di-trans,octa-cis-undecaprenyl diphosphate + beta-D-GlcNAc-(1-&gt;4)-Mur2Ac(oyl-L-Ala-gamma-D-Glu-L-Lys-D-Ala-D-Ala)-di-trans,octa-cis-undecaprenyl diphosphate = [GlcNAc-(1-&gt;4)-Mur2Ac(oyl-L-Ala-gamma-D-Glu-L-Lys-D-Ala-D-Ala)](n+1)-di-trans,octa-cis-undecaprenyl diphosphate + di-trans,octa-cis-undecaprenyl diphosphate + H(+). It participates in cell wall biogenesis; peptidoglycan biosynthesis. Peptidoglycan polymerase that catalyzes glycan chain elongation from lipid-linked precursors. The sequence is that of Biosynthetic peptidoglycan transglycosylase from Thiobacillus denitrificans (strain ATCC 25259 / T1).